The primary structure comprises 353 residues: 3-isopropylmalate dehydrogenase (353 aa).

Position 75–88 (75–88) interacts with NAD(+); sequence GPKWENLPHEHKPE. The substrate site is built by arginine 95, arginine 105, arginine 133, and aspartate 219. The Mg(2+) site is built by aspartate 219, aspartate 243, and aspartate 247. 276-288 provides a ligand contact to NAD(+); the sequence is GSAPDIAGKNIAN.

The protein belongs to the isocitrate and isopropylmalate dehydrogenases family. LeuB type 1 subfamily. In terms of assembly, homodimer. Mg(2+) serves as cofactor. The cofactor is Mn(2+).

It is found in the cytoplasm. It catalyses the reaction (2R,3S)-3-isopropylmalate + NAD(+) = 4-methyl-2-oxopentanoate + CO2 + NADH. Its pathway is amino-acid biosynthesis; L-leucine biosynthesis; L-leucine from 3-methyl-2-oxobutanoate: step 3/4. In terms of biological role, catalyzes the oxidation of 3-carboxy-2-hydroxy-4-methylpentanoate (3-isopropylmalate) to 3-carboxy-4-methyl-2-oxopentanoate. The product decarboxylates to 4-methyl-2 oxopentanoate. This chain is 3-isopropylmalate dehydrogenase, found in Chlorobium luteolum (strain DSM 273 / BCRC 81028 / 2530) (Pelodictyon luteolum).